Reading from the N-terminus, the 295-residue chain is Tyrosine recombinase XerC (295 aa).

The 84-residue stretch at 1 to 84 (MTLEEQFLSY…SLKSFYRFLT (84 aa)) folds into the Core-binding (CB) domain. A Tyr recombinase domain is found at 105–289 (KLPEFFYQDE…SMQHLTVEYR (185 aa)). Catalysis depends on residues Arg-145, Lys-169, His-241, Arg-244, and His-267. The O-(3'-phospho-DNA)-tyrosine intermediate role is filled by Tyr-276.

Belongs to the 'phage' integrase family. XerC subfamily. As to quaternary structure, forms a cyclic heterotetrameric complex composed of two molecules of XerC and two molecules of XerD.

It localises to the cytoplasm. Site-specific tyrosine recombinase, which acts by catalyzing the cutting and rejoining of the recombining DNA molecules. The XerC-XerD complex is essential to convert dimers of the bacterial chromosome into monomers to permit their segregation at cell division. It also contributes to the segregational stability of plasmids. This is Tyrosine recombinase XerC from Lactobacillus delbrueckii subsp. bulgaricus (strain ATCC 11842 / DSM 20081 / BCRC 10696 / JCM 1002 / NBRC 13953 / NCIMB 11778 / NCTC 12712 / WDCM 00102 / Lb 14).